The chain runs to 326 residues: tRNA uridine(34) hydroxylase (326 aa).

In terms of domain architecture, Rhodanese spans 123–217; it reads ADPEVFVVDT…YLEEVPEEES (95 aa). The active-site Cysteine persulfide intermediate is the Cys177. Positions 293–326 are disordered; the sequence is AVRGEQHVGGESAKQRQQRRAEKLAKKDVQRKQA. Residues 311–326 are compositionally biased toward basic and acidic residues; the sequence is RRAEKLAKKDVQRKQA.

Belongs to the TrhO family.

It carries out the reaction uridine(34) in tRNA + AH2 + O2 = 5-hydroxyuridine(34) in tRNA + A + H2O. In terms of biological role, catalyzes oxygen-dependent 5-hydroxyuridine (ho5U) modification at position 34 in tRNAs. This is tRNA uridine(34) hydroxylase from Vibrio campbellii (strain ATCC BAA-1116).